A 102-amino-acid polypeptide reads, in one-letter code: MGQIPLEHGLIVATILFALGFYGVMVRRNLLFMLMSLEIMMNAAALAFVLAGSVWAQPDGQVMFILILTLAAAEACIGLAIVLQFYHRFHHLDVDAASEMRG.

The next 3 helical transmembrane spans lie at 6–26 (LEHG…GVMV), 30–50 (LLFM…AFVL), and 62–82 (VMFI…LAIV).

This sequence belongs to the complex I subunit 4L family. In terms of assembly, NDH-1 is composed of 14 different subunits. Subunits NuoA, H, J, K, L, M, N constitute the membrane sector of the complex.

The protein resides in the cell inner membrane. It catalyses the reaction a quinone + NADH + 5 H(+)(in) = a quinol + NAD(+) + 4 H(+)(out). In terms of biological role, NDH-1 shuttles electrons from NADH, via FMN and iron-sulfur (Fe-S) centers, to quinones in the respiratory chain. The immediate electron acceptor for the enzyme in this species is believed to be ubiquinone. Couples the redox reaction to proton translocation (for every two electrons transferred, four hydrogen ions are translocated across the cytoplasmic membrane), and thus conserves the redox energy in a proton gradient. The polypeptide is NADH-quinone oxidoreductase subunit K (Acinetobacter baumannii (strain AB307-0294)).